The sequence spans 365 residues: Mitogen-activated protein kinase 13 (365 aa).

The Protein kinase domain maps to 25 to 308 (YVSPTHVGSG…AAQALTHPFF (284 aa)). An ATP-binding site is contributed by 31–39 (VGSGAYGSV). Position 47 is a phosphoserine (S47). ATP is bound at residue K54. Catalysis depends on D150, which acts as the Proton acceptor. Phosphothreonine; by MAP2K3, MAP2K4, MAP2K6 and MAP2K7 is present on T180. The short motif at 180-182 (TGY) is the TXY element. Residue Y182 is modified to Phosphotyrosine; by MAP2K3, MAP2K4, MAP2K6 and MAP2K7. Position 350 is a phosphoserine (S350).

It belongs to the protein kinase superfamily. CMGC Ser/Thr protein kinase family. MAP kinase subfamily. Interacts with MAPK8IP2. It depends on Mg(2+) as a cofactor. Post-translationally, dually phosphorylated on Thr-180 and Tyr-182 by MAP2K3/MKK3, MAP2K4/MKK4, MAP2K6/MKK6 and MAP2K7/MKK7, which activates the enzyme. Dephosphorylated by dual specificity phosphatase DUSP1.

It carries out the reaction L-seryl-[protein] + ATP = O-phospho-L-seryl-[protein] + ADP + H(+). It catalyses the reaction L-threonyl-[protein] + ATP = O-phospho-L-threonyl-[protein] + ADP + H(+). With respect to regulation, activated by phosphorylation on threonine and tyrosine by dual specificity kinases, MAP2K3/MKK3, MAP2K6/MKK6, MAP2K4/MKK4 and MAP2K7/MKK7. Activation by ultraviolet radiation, hyperosmotic shock, anisomycin or by TNF-alpha is mediated by MAP2K3/MKK3. Inhibited by dual specificity phosphatase DUSP1. Its function is as follows. Serine/threonine kinase which acts as an essential component of the MAP kinase signal transduction pathway. MAPK13 is one of the four p38 MAPKs which play an important role in the cascades of cellular responses evoked by extracellular stimuli such as pro-inflammatory cytokines or physical stress leading to direct activation of transcription factors such as ELK1 and ATF2. Accordingly, p38 MAPKs phosphorylate a broad range of proteins and it has been estimated that they may have approximately 200 to 300 substrates each. MAPK13 is one of the less studied p38 MAPK isoforms. Some of the targets are downstream kinases such as MAPKAPK2, which are activated through phosphorylation and further phosphorylate additional targets. Plays a role in the regulation of protein translation by phosphorylating and inactivating EEF2K. Involved in cytoskeletal remodeling through phosphorylation of MAPT and STMN1. Mediates UV irradiation induced up-regulation of the gene expression of CXCL14. Plays an important role in the regulation of epidermal keratinocyte differentiation, apoptosis and skin tumor development. Phosphorylates the transcriptional activator MYB in response to stress which leads to rapid MYB degradation via a proteasome-dependent pathway. MAPK13 also phosphorylates and down-regulates PRKD1 during regulation of insulin secretion in pancreatic beta cells. In Pan troglodytes (Chimpanzee), this protein is Mitogen-activated protein kinase 13 (MAPK13).